A 1115-amino-acid polypeptide reads, in one-letter code: Gamma tubulin complex adapter mto1 (1115 aa).

The interval 25–180 is disordered; it reads LTDEEVRRIL…NYISSSLDQL (156 aa). Basic and acidic residues-rich tracts occupy residues 28–41 and 56–71; these read EEVR…KEGS and EASH…DSLK. 3 stretches are compositionally biased toward polar residues: residues 72–102, 119–130, and 139–151; these read SDSG…VNKL, DTTNFDRLNDNI, and PVLT…QSQE. At Ser94 the chain carries Phosphoserine. The span at 165–176 shows a compositional bias: low complexity; the sequence is SDPSSPNYISSS. Residues 445 to 915 are a coiled coil; the sequence is NEALLLRKQE…ERNSLIKNIV (471 aa). A required for interaction with mto2 region spans residues 523 to 537; that stretch reads LMRMEQQWREDVDQL. Residues 1001–1011 show a composition bias toward polar residues; that stretch reads GSTSSIPNSPR. 2 disordered regions span residues 1001-1037 and 1067-1115; these read GSTS…AVQR and EQEG…QEHK. A phosphoserine mark is found at Ser1005 and Ser1009. Basic and acidic residues-rich tracts occupy residues 1016–1025 and 1067–1084; these read VSLDSEDKKL and EQEG…RLQD. Residues 1072-1102 are a coiled coil; the sequence is KRDKLGARERLQDLIRQNRSLSRQIKTDKES. 2 stretches are compositionally biased toward polar residues: residues 1086-1095 and 1104-1115; these read IRQNRSLSRQ and SRSPSISSQEHK.

In terms of assembly, interacts with mto2; the interaction is direct and required for efficient binding to the gamma-tubulin complex. Interacts with gamma tubulin complex subunits alp4, alp6 and gtb1. Interacts with mcp6.

It localises to the cytoplasm. The protein localises to the cytoskeleton. Its subcellular location is the microtubule organizing center. It is found in the spindle pole body. Its function is as follows. Spindle pole body (SPB) component that acts as the gamma-tubulin complex-binding protein of the SPB outer plaque. Promotes nucleation of all cytoplasmic microtubules by recruiting the gamma-tubulin complex to the spindle pole body (SPB), to the interphase microtubule organizing center (iMTOC), and to the equatorial MTOC (eMTOC) during anaphase. The sequence is that of Gamma tubulin complex adapter mto1 from Schizosaccharomyces pombe (strain 972 / ATCC 24843) (Fission yeast).